The chain runs to 393 residues: NAD(P)H-quinone oxidoreductase subunit H, chloroplastic (393 aa).

Belongs to the complex I 49 kDa subunit family. In terms of assembly, NDH is composed of at least 16 different subunits, 5 of which are encoded in the nucleus.

Its subcellular location is the plastid. The protein resides in the chloroplast thylakoid membrane. It carries out the reaction a plastoquinone + NADH + (n+1) H(+)(in) = a plastoquinol + NAD(+) + n H(+)(out). It catalyses the reaction a plastoquinone + NADPH + (n+1) H(+)(in) = a plastoquinol + NADP(+) + n H(+)(out). Functionally, NDH shuttles electrons from NAD(P)H:plastoquinone, via FMN and iron-sulfur (Fe-S) centers, to quinones in the photosynthetic chain and possibly in a chloroplast respiratory chain. The immediate electron acceptor for the enzyme in this species is believed to be plastoquinone. Couples the redox reaction to proton translocation, and thus conserves the redox energy in a proton gradient. In Chlorokybus atmophyticus (Soil alga), this protein is NAD(P)H-quinone oxidoreductase subunit H, chloroplastic.